Here is a 674-residue protein sequence, read N- to C-terminus: L-type lectin-domain containing receptor kinase IV.3 (674 aa).

Positions 1 to 22 are cleaved as a signal peptide; it reads MFFKLFTIFFFFIILLSKPLNS. N-linked (GlcNAc...) asparagine glycosylation is found at Asn21, Asn28, Asn40, Asn81, Asn136, and Asn188. Over 23-296 the chain is Extracellular; the sequence is SSQSLNFTYN…TSLQRFYKNR (274 aa). The tract at residues 26 to 263 is legume-lectin like; that stretch reads SLNFTYNSFH…SEHFVFGWSF (238 aa). A helical membrane pass occupies residues 297 to 317; sequence MPLFSLLLIPVLFVVSLIFLV. Residues 318-674 lie on the Cytoplasmic side of the membrane; the sequence is RFIVRRRRKF…IAYSIVSGGR (357 aa). In terms of domain architecture, Protein kinase spans 355 to 632; it reads FKDKDLLGSG…LQYLRGDATL (278 aa). Residues 361-369 and Lys384 each bind ATP; that span reads LGSGGFGRV. The Proton acceptor role is filled by Asp480.

It in the C-terminal section; belongs to the protein kinase superfamily. Ser/Thr protein kinase family. The protein in the N-terminal section; belongs to the leguminous lectin family.

It is found in the cell membrane. It catalyses the reaction L-seryl-[protein] + ATP = O-phospho-L-seryl-[protein] + ADP + H(+). The enzyme catalyses L-threonyl-[protein] + ATP = O-phospho-L-threonyl-[protein] + ADP + H(+). The protein is L-type lectin-domain containing receptor kinase IV.3 (LECRK43) of Arabidopsis thaliana (Mouse-ear cress).